The chain runs to 70 residues: Large ribosomal subunit protein bL31 (70 aa).

Zn(2+) contacts are provided by Cys-16, Cys-18, Cys-37, and Cys-40.

This sequence belongs to the bacterial ribosomal protein bL31 family. Type A subfamily. Part of the 50S ribosomal subunit. Zn(2+) is required as a cofactor.

Binds the 23S rRNA. In Pasteurella multocida (strain Pm70), this protein is Large ribosomal subunit protein bL31.